The primary structure comprises 807 residues: 1-phosphatidylinositol 4,5-bisphosphate phosphodiesterase delta-4 (807 aa).

Residues 16 to 124 (LLMQEGTMMR…WMRGLQLLVD (109 aa)) form the PH domain. Residues 26–53 (KVRTKSWKKLRYFRLQNDGMTVWHGSQP) form a substrate binding region. EF-hand domains are found at residues 134 to 169 (QMDQ…MNVE), 170 to 205 (MDEE…LTKR), and 203 to 237 (TKRT…EQKE). Positions 147, 149, 151, 153, 158, 183, 187, 189, and 194 each coordinate Ca(2+). The short motif at 213–243 (EDFSSDKQKLTLLEFVDFLRKEQKEKDHAPD) is the GBA element. The PI-PLC X-box domain maps to 290 to 435 (QDMTQPLSHY…LRGKILVKGK (146 aa)). Residue His-305 is part of the active site. Ca(2+)-binding residues include Asn-306, Glu-335, and Asp-337. His-350 is an active-site residue. Glu-384 contacts Ca(2+). Residues Lys-433 and Lys-435 each coordinate substrate. The segment at 442–490 (VDKEEEEEEEEEELEKDEGPDLDPASPELDTQPQPETQGQAAGNKKERK) is disordered. Acidic residues predominate over residues 443 to 462 (DKEEEEEEEEEELEKDEGPD). The segment covering 470–482 (LDTQPQPETQGQA) has biased composition (polar residues). One can recognise a PI-PLC Y-box domain in the interval 538–654 (LSALVVYLRT…GYVLKPEFLR (117 aa)). Substrate-binding residues include Ser-567 and Arg-594. A C2 domain is found at 654–781 (RDTQSSFNPE…QGYRHVSLLS (128 aa)). Ca(2+) is bound by residues Asp-697, Asn-721, Asp-750, and Tyr-751. A PDZ-binding motif is present at residues 776 to 779 (HVSL).

In terms of assembly, interacts with GRIP1. Interacts (via GBA motif) with guanine nucleotide-binding protein G(i) alpha subunit GNAI3 (inactive GDP-bound form)l low-affinity interaction. Ca(2+) is required as a cofactor.

It localises to the membrane. The protein resides in the nucleus. It is found in the cytoplasm. The protein localises to the endoplasmic reticulum. The enzyme catalyses a 1,2-diacyl-sn-glycero-3-phospho-(1D-myo-inositol-4,5-bisphosphate) + H2O = 1D-myo-inositol 1,4,5-trisphosphate + a 1,2-diacyl-sn-glycerol + H(+). It catalyses the reaction a 1,2-diacyl-sn-glycero-3-phospho-(1D-myo-inositol) + H2O = 1D-myo-inositol 1-phosphate + a 1,2-diacyl-sn-glycerol + H(+). Hydrolyzes the phosphatidylinositol 4,5-bisphosphate (PIP2) to generate 2 second messenger molecules diacylglycerol (DAG) and inositol 1,4,5-trisphosphate (IP3). DAG mediates the activation of protein kinase C (PKC), while IP3 releases Ca(2+) from intracellular stores. Required for acrosome reaction in sperm during fertilization, probably by acting as an important enzyme for intracellular Ca(2+) mobilization in the zona pellucida-induced acrosome reaction. May play a role in cell growth. Modulates the liver regeneration in cooperation with nuclear PKC. Overexpression up-regulates the Erk signaling pathway and proliferation. The polypeptide is 1-phosphatidylinositol 4,5-bisphosphate phosphodiesterase delta-4 (Mus musculus (Mouse)).